Here is a 452-residue protein sequence, read N- to C-terminus: Tubulin alpha-2/alpha-4 chain (452 aa).

Glutamine 11 provides a ligand contact to GTP. Lysine 40 is subject to N6-acetyllysine. Glutamate 71, serine 140, glycine 144, threonine 145, threonine 179, asparagine 206, and asparagine 228 together coordinate GTP. Glutamate 71 serves as a coordination point for Mg(2+). The active site involves glutamate 254. Positions 432-452 (YEEVGVDSVEGEGEEEGGEEY) are disordered.

It belongs to the tubulin family. In terms of assembly, dimer of alpha and beta chains. A typical microtubule is a hollow water-filled tube with an outer diameter of 25 nm and an inner diameter of 15 nM. Alpha-beta heterodimers associate head-to-tail to form protofilaments running lengthwise along the microtubule wall with the beta-tubulin subunit facing the microtubule plus end conferring a structural polarity. Microtubules usually have 13 protofilaments but different protofilament numbers can be found in some organisms and specialized cells. Mg(2+) is required as a cofactor. Post-translationally, undergoes a tyrosination/detyrosination cycle, the cyclic removal and re-addition of a C-terminal tyrosine residue by the enzymes tubulin tyrosine carboxypeptidase (TTCP) and tubulin tyrosine ligase (TTL), respectively. Acetylation of alpha chains at Lys-40 stabilizes microtubules and affects affinity and processivity of microtubule motors. This modification has a role in multiple cellular functions, ranging from cell motility, cell cycle progression or cell differentiation to intracellular trafficking and signaling.

The protein resides in the cytoplasm. The protein localises to the cytoskeleton. The catalysed reaction is GTP + H2O = GDP + phosphate + H(+). Its function is as follows. Tubulin is the major constituent of microtubules, a cylinder consisting of laterally associated linear protofilaments composed of alpha- and beta-tubulin heterodimers. Microtubules grow by the addition of GTP-tubulin dimers to the microtubule end, where a stabilizing cap forms. Below the cap, tubulin dimers are in GDP-bound state, owing to GTPase activity of alpha-tubulin. This chain is Tubulin alpha-2/alpha-4 chain (TUB2), found in Patella vulgata (Common limpet).